The primary structure comprises 85 residues: Putative transmembrane protein ORF85 (85 aa).

2 helical membrane-spanning segments follow: residues 12–32 (FPPT…KFLS) and 44–64 (LGII…GAGI).

The protein resides in the host membrane. This is Putative transmembrane protein ORF85 from Acidianus convivator (ABV).